The sequence spans 596 residues: Malto-oligosyltrehalose trehalohydrolase (596 aa).

263 to 268 (RLDAVH) lines the substrate pocket. Asp-265 (nucleophile) is an active-site residue. Glu-302 serves as the catalytic Proton donor. Residues 327–331 (DDFHH) and 397–402 (HDQIGN) contribute to the substrate site.

It belongs to the glycosyl hydrolase 13 family.

Its subcellular location is the cytoplasm. It catalyses the reaction hydrolysis of (1-&gt;4)-alpha-D-glucosidic linkage in 4-alpha-D-[(1-&gt;4)-alpha-D-glucanosyl]n trehalose to yield trehalose and (1-&gt;4)-alpha-D-glucan.. The protein operates within glycan biosynthesis; trehalose biosynthesis. The sequence is that of Malto-oligosyltrehalose trehalohydrolase (treZ) from Rhizobium sp. (strain M-11).